We begin with the raw amino-acid sequence, 359 residues long: uncharacterized protein (359 aa).

It belongs to the glycosyltransferase group 1 family. Glycosyltransferase 4 subfamily.

This is an uncharacterized protein from Bacillus subtilis (strain 168).